We begin with the raw amino-acid sequence, 388 residues long: MGKKAIQFGGGNIGRGFVAEFLHEAGYEVVFIDVVDKIIDALKSTPSYEVTEVSEEGEKTKTITNYRAINSKTNEEDVVKEIGTADVVTCAVGPNVLKFIAPVIAKGIDARTASKPVAVIACENAIGATDTLRGFIEQNTDKDRLSSMSERARFANSAIDRIVPNQPPNAGLNVRIEKFYEWTVEQTPFGEFGHPDIPAIHWVDDLKPYIERKLFTVNTGHATTAYYGHMRGKKMIADALADAEIRQIVHKVLEQTAKLITTKHEITEQEQNEYVDTIVKRMSNPFLEDNVERVGRAPLRKLSRNERFIGPASQLAEKGLPFDALLGSIEMALRFQNVPGDEESAELAKILKEMSAEEATGKLTGLEKHHPLYEPVQNVIAKVQKDSK.

5-16 (AIQFGGGNIGRG) is an NAD(+) binding site. Residue Lys213 is part of the active site.

This sequence belongs to the mannitol dehydrogenase family. Monomer.

It catalyses the reaction D-mannitol 1-phosphate + NAD(+) = beta-D-fructose 6-phosphate + NADH + H(+). In terms of biological role, catalyzes the NAD(H)-dependent interconversion of D-fructose 6-phosphate and D-mannitol 1-phosphate in the mannitol metabolic pathway. The polypeptide is Mannitol-1-phosphate 5-dehydrogenase (mpdA) (Aspergillus fumigatus (strain CBS 144.89 / FGSC A1163 / CEA10) (Neosartorya fumigata)).